We begin with the raw amino-acid sequence, 584 residues long: uncharacterized protein (584 aa).

Disordered stretches follow at residues 151–188 (EHPP…DNDL), 222–243 (KRKE…SRAN), 399–418 (SETP…PPDF), and 433–584 (MQPS…AKSD). A compositionally biased stretch (basic and acidic residues) spans 159 to 188 (TSSEKTRSENRERKKRWREQNEERNKDNDL). The segment covering 231 to 243 (LSQNQSSNASRAN) has biased composition (low complexity). Polar residues-rich tracts occupy residues 399 to 409 (SETPTPVSGNG), 433 to 453 (MQPS…SSEM), 483 to 500 (NAVT…SGSP), 511 to 531 (NYSQ…SSLP), and 572 to 584 (QRSS…AKSD).

This is an uncharacterized protein from Schizosaccharomyces pombe (strain 972 / ATCC 24843) (Fission yeast).